We begin with the raw amino-acid sequence, 633 residues long: Leucine-rich repeat and IQ domain-containing protein 3 (633 aa).

3 LRR repeats span residues serine 51–lysine 72, lysine 73–asparagine 94, and asparagine 98–serine 119. Residues cysteine 132–glutamine 179 form the LRRCT domain. In terms of domain architecture, IQ spans histidine 215–histidine 244. The tract at residues asparagine 322–aspartate 343 is disordered. Positions glutamate 556–tyrosine 616 form a coiled coil.

This chain is Leucine-rich repeat and IQ domain-containing protein 3 (Lrriq3), found in Rattus norvegicus (Rat).